Consider the following 883-residue polypeptide: Alanine--tRNA ligase (883 aa).

The Zn(2+) site is built by His563, His567, Cys677, and His681.

It belongs to the class-II aminoacyl-tRNA synthetase family. Requires Zn(2+) as cofactor.

The protein localises to the cytoplasm. The enzyme catalyses tRNA(Ala) + L-alanine + ATP = L-alanyl-tRNA(Ala) + AMP + diphosphate. Its function is as follows. Catalyzes the attachment of alanine to tRNA(Ala) in a two-step reaction: alanine is first activated by ATP to form Ala-AMP and then transferred to the acceptor end of tRNA(Ala). Also edits incorrectly charged Ser-tRNA(Ala) and Gly-tRNA(Ala) via its editing domain. This chain is Alanine--tRNA ligase, found in Cereibacter sphaeroides (strain ATCC 17029 / ATH 2.4.9) (Rhodobacter sphaeroides).